A 516-amino-acid chain; its full sequence is Cytochrome P450 monooxygenase lcsI (516 aa).

Residues 20–42 (ICVAAGCAFALSLLYLYVRALYL) traverse the membrane as a helical segment. N-linked (GlcNAc...) asparagine glycosylation is found at asparagine 131, asparagine 184, asparagine 415, asparagine 420, and asparagine 442. Heme is bound at residue cysteine 456.

This sequence belongs to the cytochrome P450 family. The cofactor is heme.

The protein localises to the membrane. Its pathway is secondary metabolite biosynthesis. Cytochrome P450 monooxygenase; part of the gene cluster that mediates the biosynthesis of the lipopeptide antibiotics leucinostatins that show extensive biological activities, including antimalarial, antiviral, antibacterial, antifungal, and antitumor activities, as well as phytotoxic. Leucinostatin A contains nine amino acid residues, including the unusual amino acid 4-methyl-L-proline (MePro), 2-amino-6-hydroxy-4-methyl-8-oxodecanoic acid (AHyMeOA), 3-hydroxyleucine (HyLeu), alpha-aminoisobutyric acid (AIB), beta-Ala, a 4-methylhex-2-enoic acid at the N-terminus as well as a N1,N1-dimethylpropane-1,2-diamine (DPD) at the C-terminus. The biosynthesis of leucinostatins is probably initiated with the assembly of 4-methylhex-2-enoic acid by a reducing PKS. Two reducing polyketide synthases, lcsB and lcsC, have been identified in the cluster and it is not clear which is the one that assembles 4-methylhex-2-enoic acid since both contain KS, AT, DH, cMT, ER, KR and ACP domains. The polyketide residue might be transferred to the NRPS lcsA, mediated by two additional enzymes, the acyl-CoA ligase lcsD and the thioesterase lcsE. The linear polyketide carboxylic acid, which is released from PKS, is converted to a CoA thioester by lcsD, and then lcsE hydrolyzes the thiol bond and shuttles the polyketide intermediate to lcsA. The C domain of the first module catalyzed the condensation of 4-methylhex-2-enoic acid and MePro carried by domain A1, followed by successive condensations of nine amino acids to trigger the elongation of the linear peptide. A5 and A6 domains of lcsA are proposed to incorporate leucine, A2 AHyMeOA, and A3 incorporates HyLeu. A4, A7 and A8 incorporate AIB. The AHyMeOA in leucinostatin A activated by the A2 might be produced by the second PKS (lcsB or lcsC) present within the cluster. The MePro is probably produced via leucine cyclization and may originate from a separate pathway, independent of the cluster. Another nonproteinogenic amino acid, beta-Ala, could be produced by an aspartic acid decarboxylase also localized outside of the cluster. Two candidates are VFPBJ_01400 and VFPBJ_10476. The final peptide scaffold may be released by the NAD(P)H-dependent thioester reductase (TE) at the C-terminal region of lcsA. Transamination of the lcsA product by the transaminase lcsP may produce DPD at the C-terminus. Further hydroxylation steps performed alternatively by the cytochrome P450 monooxygenases lcsI, lcsK and lcsN then yield the non-methylated leucinostatins precursor. It is also possible that leucines can be hydroxylated prior to their incorporation into the peptide. Varying extents of methylation then lead to the formation of leucinostatins A and B. This chain is Cytochrome P450 monooxygenase lcsI, found in Purpureocillium lilacinum (Paecilomyces lilacinus).